Consider the following 411-residue polypeptide: MRMPAGFLINAMKKQNLVILGSTGSIGKSTLSVIEHNPEKYHAFALVGGRNVDLMVEQCVKFQPEFAALDDENAAKQLAEKLKSAGKKTKVLAGQKAICELAAHPEADQVMAAIVGAAGLLPTLSAVQASKTVLLANKETLVTCGQIFIDEVKRTKARLLPVDSEHNAIFQSLPPEAQQQIGFCPLKELGINKIVLTGSGGPFRYTDLTEFDNITPEQAVAHPNWSMGKKISVDSATMMNKGLEYIEARWLFNAGAEEMEVIIHPQSIIHSMVRYIDGSVIAQMGNPDMRTPIAETMAYPGRIVSGVTPLDFYQLSGLTFLEPDYERYPCLKLAIEAFAAGQYATTAMNAANEIAVEAFLNRMIKFTDIARVNAKVVELIQPQQINCIDDVLAVDKQSRLVAKEVIVSLKA.

8 residues coordinate NADPH: Thr23, Gly24, Ser25, Ile26, Gly49, Arg50, Asn51, and Asn137. Residue Lys138 participates in 1-deoxy-D-xylulose 5-phosphate binding. Glu139 contacts NADPH. Asp163 is a Mn(2+) binding site. Ser164, Glu165, Ser199, and His222 together coordinate 1-deoxy-D-xylulose 5-phosphate. Glu165 is a Mn(2+) binding site. NADPH is bound at residue Gly228. 1-deoxy-D-xylulose 5-phosphate-binding residues include Ser235, Asn240, Lys241, and Glu244. A Mn(2+)-binding site is contributed by Glu244.

It belongs to the DXR family. It depends on Mg(2+) as a cofactor. The cofactor is Mn(2+).

It carries out the reaction 2-C-methyl-D-erythritol 4-phosphate + NADP(+) = 1-deoxy-D-xylulose 5-phosphate + NADPH + H(+). Its pathway is isoprenoid biosynthesis; isopentenyl diphosphate biosynthesis via DXP pathway; isopentenyl diphosphate from 1-deoxy-D-xylulose 5-phosphate: step 1/6. Catalyzes the NADPH-dependent rearrangement and reduction of 1-deoxy-D-xylulose-5-phosphate (DXP) to 2-C-methyl-D-erythritol 4-phosphate (MEP). The sequence is that of 1-deoxy-D-xylulose 5-phosphate reductoisomerase from Mannheimia succiniciproducens (strain KCTC 0769BP / MBEL55E).